Consider the following 532-residue polypeptide: Methionine--tRNA ligase (532 aa).

The 'HIGH' region motif lies at 16–26 (YYVNDVPHLGS). Zn(2+) is bound by residues cysteine 131, cysteine 134, cysteine 149, and histidine 152. The 'KMSKS' region signature appears at 305–309 (KMGKS). Residue lysine 308 coordinates ATP.

The protein belongs to the class-I aminoacyl-tRNA synthetase family. MetG type 2A subfamily. As to quaternary structure, monomer. Requires Zn(2+) as cofactor.

The protein localises to the cytoplasm. The catalysed reaction is tRNA(Met) + L-methionine + ATP = L-methionyl-tRNA(Met) + AMP + diphosphate. Functionally, is required not only for elongation of protein synthesis but also for the initiation of all mRNA translation through initiator tRNA(fMet) aminoacylation. The sequence is that of Methionine--tRNA ligase (metG) from Synechocystis sp. (strain ATCC 27184 / PCC 6803 / Kazusa).